We begin with the raw amino-acid sequence, 203 residues long: Small ribosomal subunit protein uS4 (203 aa).

In terms of domain architecture, S4 RNA-binding spans 93 to 173 (RRLDNVVFRS…FPSWIQVDKA (81 aa)).

Belongs to the universal ribosomal protein uS4 family. Part of the 30S ribosomal subunit. Contacts protein S5. The interaction surface between S4 and S5 is involved in control of translational fidelity.

In terms of biological role, one of the primary rRNA binding proteins, it binds directly to 16S rRNA where it nucleates assembly of the body of the 30S subunit. Its function is as follows. With S5 and S12 plays an important role in translational accuracy. This chain is Small ribosomal subunit protein uS4, found in Chlorobium limicola (strain DSM 245 / NBRC 103803 / 6330).